Here is a 507-residue protein sequence, read N- to C-terminus: Proton-coupled zinc antiporter SLC30A1 (507 aa).

Topologically, residues 1–10 (MGCWGRNRGR) are cytoplasmic. The chain crosses the membrane as a helical span at residues 11–31 (LLCMLLLTFMFMVLEVVVSRV). The Extracellular portion of the chain corresponds to 32 to 35 (TASL). The chain crosses the membrane as a helical span at residues 36-56 (AMLSDSFHMLSDVLALVVALV). Histidine 43 and aspartate 47 together coordinate Zn(2+). Residues 57–78 (AERFARRTHATQKNTFGWIRAE) lie on the Cytoplasmic side of the membrane. A helical membrane pass occupies residues 79–99 (VMGALVNAIFLTGLCFAILLE). Residues 100 to 113 (AVERFIEPHEMQQP) are Extracellular-facing. Residues 114–134 (LVVLSVGVAGLLVNVLGLCLF) traverse the membrane as a helical segment. The Cytoplasmic segment spans residues 135-247 (HHHSGEGQGA…RAGQLNMRGV (113 aa)). The interval 140–218 (EGQGAGHGHS…EKLRSDDPVD (79 aa)) is disordered. The tract at residues 145–156 (GHGHSHGHGHGH) is 6 X 2 AA approximate repeats of H-G. Over residues 147–165 (GHSHGHGHGHLAKGARKAG) the composition is skewed to basic residues. The segment covering 188-200 (TNTLVANTSNSNG) has biased composition (polar residues). A compositionally biased stretch (basic and acidic residues) spans 204–215 (DQAEPEKLRSDD). A helical membrane pass occupies residues 248–268 (FLHVLGDALGSVIVVVNALVF). Residues histidine 250 and aspartate 254 each contribute to the Zn(2+) site. Residues 269-307 (YFSWKGCTEDDFCVNPCFPDPCKSSVELMNSTQAPMHEA) are Extracellular-facing. Residue asparagine 298 is glycosylated (N-linked (GlcNAc...) asparagine). A helical membrane pass occupies residues 308–328 (GPCWVLYLDPTLCIIMVCILL). Residues 329 to 507 (YTTYPLLKES…VPNKQPESSL (179 aa)) are Cytoplasmic-facing. The residue at position 506 (serine 506) is a Phosphoserine.

The protein belongs to the cation diffusion facilitator (CDF) transporter (TC 2.A.4) family. SLC30A subfamily. In terms of assembly, homodimer. Interacts with TMEM163. Interacts and forms a complex with TMC6 and TMC8; the interaction regulates zinc transport into the ER. In terms of tissue distribution, widely expressed. Detected in duodenum and jejunum but not in ileum and colon (at protein level). Expressed by neuroglial cells (at protein level).

Its subcellular location is the cell membrane. It localises to the basolateral cell membrane. It is found in the cytoplasmic vesicle membrane. The protein localises to the cytoplasm. The protein resides in the endoplasmic reticulum membrane. Its subcellular location is the golgi apparatus membrane. It localises to the nucleus membrane. It catalyses the reaction Zn(2+)(in) + 2 H(+)(out) = Zn(2+)(out) + 2 H(+)(in). Calcium-dependent. In terms of biological role, zinc ion:proton antiporter that could function at the plasma membrane mediating zinc efflux from cells against its electrochemical gradient protecting them from intracellular zinc accumulation and toxicity. Alternatively, could prevent the transport to the plasma membrane of CACNB2, the L-type calcium channels regulatory subunit, through a yet to be defined mechanism. By modulating the expression of these channels at the plasma membrane, could prevent calcium and zinc influx into cells. By the same mechanism, could also prevent L-type calcium channels-mediated heavy metal influx into cells. In some cells, could also function as a zinc ion:proton antiporter mediating zinc entry into the lumen of cytoplasmic vesicles. In macrophages, can increase zinc ions concentration into the lumen of cytoplasmic vesicles containing engulfed bacteria and could help inactivate them. Forms a complex with TMC6/EVER1 and TMC8/EVER2 at the ER membrane of keratynocytes which facilitates zinc uptake into the ER. Down-regulates the activity of transcription factors induced by zinc and cytokines. The sequence is that of Proton-coupled zinc antiporter SLC30A1 from Rattus norvegicus (Rat).